A 260-amino-acid chain; its full sequence is Snake venom serine proteinase 4a (260 aa).

The first 18 residues, 1–18 (MVLIRVLANLLILQLSYA), serve as a signal peptide directing secretion. Positions 19-24 (QMSSEL) are excised as a propeptide. In terms of domain architecture, Peptidase S1 spans 25–251 (VTGGDECNRN…HLDWIQRIIA (227 aa)). 6 disulfides stabilise this stretch: cysteine 31/cysteine 163, cysteine 50/cysteine 66, cysteine 98/cysteine 258, cysteine 142/cysteine 212, cysteine 174/cysteine 191, and cysteine 202/cysteine 227. Catalysis depends on histidine 65, which acts as the Charge relay system. Residue asparagine 103 is glycosylated (N-linked (GlcNAc...) asparagine). The active-site Charge relay system is aspartate 110. Serine 206 functions as the Charge relay system in the catalytic mechanism.

Belongs to the peptidase S1 family. Snake venom subfamily. Monomer. As to expression, expressed by the venom gland.

It is found in the secreted. Its function is as follows. Snake venom serine protease that may act in the hemostasis system of the prey. This chain is Snake venom serine proteinase 4a, found in Crotalus adamanteus (Eastern diamondback rattlesnake).